The sequence spans 293 residues: tRNA pseudouridine synthase A (293 aa).

Asp67 acts as the Nucleophile in catalysis. Residue Tyr125 participates in substrate binding.

It belongs to the tRNA pseudouridine synthase TruA family. In terms of assembly, homodimer.

It carries out the reaction uridine(38/39/40) in tRNA = pseudouridine(38/39/40) in tRNA. Its function is as follows. Formation of pseudouridine at positions 38, 39 and 40 in the anticodon stem and loop of transfer RNAs. The chain is tRNA pseudouridine synthase A from Synechococcus sp. (strain CC9605).